Reading from the N-terminus, the 698-residue chain is UV radiation resistance-associated protein (698 aa).

Over residues 1–10 (MSSCASLGGP) the composition is skewed to low complexity. Positions 1 to 21 (MSSCASLGGPVPLPPPGPSAA) are disordered. One can recognise a C2 domain in the interval 23-149 (TSGAPARALH…YLGQQIHARN (127 aa)). The interval 199 to 268 (HRAQCAIKQT…REVAFLHKQQ (70 aa)) is sufficient for interaction with STX7; VTI1B AND STX8. The stretch at 200-304 (RAQCAIKQTQ…LRKECTAKRE (105 aa)) forms a coiled coil. The sufficient for interaction with VPS16, required for interaction with CEP63 stretch occupies residues 269 to 441 (MALQDKGSAF…IAQLRYQHGL (173 aa)). The tract at residues 442–698 (GTPDLRQTLP…FRRPRRSSDK (257 aa)) is required for interaction with PRKDC, XRCC6 and XRCC5. Disordered regions lie at residues 477–551 (PKRQ…SSLD) and 565–586 (VDLG…EQGE). Ser-492 bears the Phosphoserine mark. Ser-497 is modified (phosphoserine; by MTOR). Ser-507 is subject to Phosphoserine. The residue at position 517 (Thr-517) is a Phosphothreonine. Phosphoserine is present on residues Ser-521, Ser-548, Ser-549, Ser-570, and Ser-688.

In terms of assembly, component of the PI3K (PI3KC3/PI3K-III/class III phosphatidylinositol 3-kinase) complex II (PI3KC3-C2) in which the core composed of the catalytic subunit PIK3C3, the regulatory subunit PIK3R4 and BECN1 is associated with UVRAG; in the complex interacts directly with BECN1. PI3KC3-C2 can associate with further regulatory subunits such as RUBCN and probably SH3GLB1/Bif-1. Interacts with SH3GLB1; UVRAG bridges the interaction to BECN1 indicative for an association with the PI3K complex PI3KC3-C2. Interacts with RINT1. Associates with the NRZ complex under basal conditions and dissociates from it under autophagy conditions to associate with the PI3K complex; these complex associations seem to be mutually exclusive. Interacts with VPS16; VPS11; VPS18; VPS33 (VPS33A or VPS33B) and VPS39; indicative for an association with a class C Vps tethering complex (possibly the HOPS complex). Interacts with RAB7A; RAB7A competes with UVRAG for RUBCN binding. Interacts with STX7, VTI1B, STX8. Interacts with PRKDC, XRCC6 and XRCC5; indicative for an association with the DNA-dependent protein kinase complex DNA-PK. Interacts with CEP63. Directly interacts with FEZ1 and SCOC; the interaction with SCOC is reduced by amino acid starvation, but the complex is stabilized in the presence of FEZ1. Interacts with BECN1P1/BECN2. Interacts with SLAMF1. Interacts with RUBCNL/PACER; promoting targeting of UVRAG to autophagosome. Interacts with WNK1. In terms of processing, phosphorylated at Ser-497 by MTOR under basal conditions; increases the interaction with RUBCN implicated in inhibitory effect of RUBCN on PI3KC3 and decreases interaction with RAB7A, and VPS16 and VPS39 (indicative for a class C Vps complex, possibly the HOPS complex).

The protein localises to the late endosome. Its subcellular location is the lysosome. It localises to the cytoplasmic vesicle. It is found in the autophagosome. The protein resides in the early endosome. The protein localises to the endoplasmic reticulum. Its subcellular location is the midbody. It localises to the chromosome. It is found in the centromere. Versatile protein that is involved in regulation of different cellular pathways implicated in membrane trafficking. Involved in regulation of the COPI-dependent retrograde transport from Golgi and the endoplasmic reticulum by associating with the NRZ complex; the function is dependent on its binding to phosphatidylinositol 3-phosphate (PtdIns(3)P). During autophagy acts as a regulatory subunit of the alternative PI3K complex II (PI3KC3-C2) that mediates formation of phosphatidylinositol 3-phosphate and is believed to be involved in maturation of autophagosomes and endocytosis. Activates lipid kinase activity of PIK3C3. Involved in the regulation of degradative endocytic trafficking and cytokinesis, and in regulation of ATG9A transport from the Golgi to the autophagosome; the functions seems to implicate its association with PI3KC3-C2. Involved in maturation of autophagosomes and degradative endocytic trafficking independently of BECN1 but depending on its association with a class C Vps complex (possibly the HOPS complex); the association is also proposed to promote autophagosome recruitment and activation of Rab7 and endosome-endosome fusion events. Enhances class C Vps complex (possibly HOPS complex) association with a SNARE complex and promotes fusogenic SNARE complex formation during late endocytic membrane fusion. In case of negative-strand RNA virus infection is required for efficient virus entry, promotes endocytic transport of virions and is implicated in a VAMP8-specific fusogenic SNARE complex assembly. Its function is as follows. Involved in maintaining chromosomal stability. Promotes DNA double-strand break (DSB) repair by association with DNA-dependent protein kinase complex DNA-PK and activating it in non-homologous end joining (NHEJ). Required for centrosome stability and proper chromosome segregation. The chain is UV radiation resistance-associated protein (Uvrag) from Mus musculus (Mouse).